Reading from the N-terminus, the 278-residue chain is Large ribosomal subunit protein uL2 (278 aa).

The interval 224–278 (VAMNPVDHPHGGGEGRTSGGRNPVTPWGVPTKGKKTRSNKRTDTFILSSRHNRKK) is disordered.

The protein belongs to the universal ribosomal protein uL2 family. In terms of assembly, part of the 50S ribosomal subunit. Forms a bridge to the 30S subunit in the 70S ribosome.

One of the primary rRNA binding proteins. Required for association of the 30S and 50S subunits to form the 70S ribosome, for tRNA binding and peptide bond formation. It has been suggested to have peptidyltransferase activity; this is somewhat controversial. Makes several contacts with the 16S rRNA in the 70S ribosome. This is Large ribosomal subunit protein uL2 from Methylorubrum extorquens (strain CM4 / NCIMB 13688) (Methylobacterium extorquens).